The chain runs to 458 residues: MTKEVKQLFGTDGVRGKANYEPMTVELSVLLGKAVAGVLQESKSGKHRVVVGKDTRLSGYMFENALVAGLTSMGIETLVLGPIPTPGVAFITRAYRADAGIMISASHNPYWDNGIKIFSSEGFKISDVIERRIEQMVALKEFGNFPDDCAVGKNKRVVDAMGRYIEFAKATFPRGRTLKGLKIVLDCAHGAAYKVAPSVFEELDAEVICYGCEPTGSNINDNCGALFPSVIQKAVIEHKADVGIALDGDGDRVIMVDEKGHIVDGDMILSICANDLKKKDLLRGNRVIATVMTNFGVLKYLESVGIEALISPVGDRHVLQNMLEYEVNLGGEQSGHMIFLDYNTTGDGIVSALQVLRIMIESESTLSDLTSLIVKSPQALINVAVKEKIPLDTLPLVQEALRDVRSSLGDSGRVLLRYSGTENICRVMVEGLKKHQVDSLAKTIADIVDSELGVGMVE.

The Phosphoserine intermediate role is filled by Ser-106. Mg(2+)-binding residues include Ser-106, Asp-247, Asp-249, and Asp-251. At Ser-106 the chain carries Phosphoserine.

This sequence belongs to the phosphohexose mutase family. Mg(2+) is required as a cofactor. In terms of processing, activated by phosphorylation.

The enzyme catalyses alpha-D-glucosamine 1-phosphate = D-glucosamine 6-phosphate. Catalyzes the conversion of glucosamine-6-phosphate to glucosamine-1-phosphate. The sequence is that of Phosphoglucosamine mutase from Chlamydia abortus (strain DSM 27085 / S26/3) (Chlamydophila abortus).